The primary structure comprises 164 residues: ATP synthase subunit b (164 aa).

The helical transmembrane segment at 6-26 (GELVGNFILVTGSVIVLLLLI) threads the bilayer.

The protein belongs to the ATPase B chain family. In terms of assembly, F-type ATPases have 2 components, F(1) - the catalytic core - and F(0) - the membrane proton channel. F(1) has five subunits: alpha(3), beta(3), gamma(1), delta(1), epsilon(1). F(0) has three main subunits: a(1), b(2) and c(10-14). The alpha and beta chains form an alternating ring which encloses part of the gamma chain. F(1) is attached to F(0) by a central stalk formed by the gamma and epsilon chains, while a peripheral stalk is formed by the delta and b chains.

It localises to the cell membrane. In terms of biological role, f(1)F(0) ATP synthase produces ATP from ADP in the presence of a proton or sodium gradient. F-type ATPases consist of two structural domains, F(1) containing the extramembraneous catalytic core and F(0) containing the membrane proton channel, linked together by a central stalk and a peripheral stalk. During catalysis, ATP synthesis in the catalytic domain of F(1) is coupled via a rotary mechanism of the central stalk subunits to proton translocation. Component of the F(0) channel, it forms part of the peripheral stalk, linking F(1) to F(0). This chain is ATP synthase subunit b, found in Streptococcus pyogenes serotype M1.